The primary structure comprises 227 residues: Cleavage and polyadenylation specificity factor subunit 5 (227 aa).

In terms of domain architecture, Nudix hydrolase spans 76-201; sequence MRRTVEGVLI…KLVAAPLFEL (126 aa). Positions 102–104 are interaction with RNA; it reads TFF. Residues 109–130 carry the Nudix box motif; it reads GELNPGEDEVEGLKRLMTEILG.

It belongs to the Nudix hydrolase family. CPSF5 subfamily. Homodimer (via N- and C-terminus); binds RNA as homodimer. Component of the cleavage factor Im (CFIm) complex.

It is found in the nucleus. It localises to the cytoplasm. In terms of biological role, component of the cleavage factor Im (CFIm) complex that functions as an activator of the pre-mRNA 3'-end cleavage and polyadenylation processing required for the maturation of pre-mRNA into functional mRNAs. CFIm contributes to the recruitment of multiprotein complexes on specific sequences on the pre-mRNA 3'-end, so called cleavage and polyadenylation signals (pA signals). Most pre-mRNAs contain multiple pA signals, resulting in alternative cleavage and polyadenylation (APA) producing mRNAs with variable 3'-end formation. The CFIm complex acts as a key regulator of cleavage and polyadenylation site choice during APA through its binding to 5'-UGUA-3' elements localized in the 3'-untranslated region (UTR) for a huge number of pre-mRNAs. Binds to 5'-UGUA-3' elements localized upstream of pA signals that act as enhancers of pre-mRNA 3'-end processing. The homodimer mediates simultaneous sequence-specific recognition of two 5'-UGUA-3' elements within the pre-mRNA. Plays a role in somatic cell fate transitions and pluripotency by regulating widespread changes in gene expression through an APA-dependent function. Binds to chromatin. Binds to, but does not hydrolyze mono- and di-adenosine nucleotides. The polypeptide is Cleavage and polyadenylation specificity factor subunit 5 (Xenopus laevis (African clawed frog)).